A 69-amino-acid chain; its full sequence is DNA-directed RNA polymerase subunit epsilon (69 aa).

It belongs to the RNA polymerase subunit epsilon family. In terms of assembly, RNAP is composed of a core of 2 alpha, a beta and a beta' subunit. The core is associated with a delta subunit, and at least one of epsilon or omega. When a sigma factor is associated with the core the holoenzyme is formed, which can initiate transcription.

It catalyses the reaction RNA(n) + a ribonucleoside 5'-triphosphate = RNA(n+1) + diphosphate. In terms of biological role, a non-essential component of RNA polymerase (RNAP). The polypeptide is DNA-directed RNA polymerase subunit epsilon (Shouchella clausii (strain KSM-K16) (Alkalihalobacillus clausii)).